Consider the following 357-residue polypeptide: Glutamine synthetase cytosolic isozyme (357 aa).

The 81-residue stretch at 20–100 (VIAEYIWIGG…VICDAYSPNG (81 aa)) folds into the GS beta-grasp domain. Positions 107 to 357 (KRAAAAKIFN…IAETTILWKP (251 aa)) constitute a GS catalytic domain.

This sequence belongs to the glutamine synthetase family. Homooctamer.

It is found in the cytoplasm. The catalysed reaction is L-glutamate + NH4(+) + ATP = L-glutamine + ADP + phosphate + H(+). This chain is Glutamine synthetase cytosolic isozyme, found in Pinus sylvestris (Scotch pine).